The following is a 235-amino-acid chain: MICOS complex subunit MIC25 (235 aa).

The N-myristoyl glycine moiety is linked to residue Gly-2. Ser-13 and Ser-31 each carry phosphoserine. 2 disordered regions span residues 31–90 (SENV…VKRY) and 106–132 (KRER…HEEQ). Residues 129 to 176 (HEEQKSVRLARELESREAELRRRDTFYKEQLERIERKNAEMYKLSSEQ) are a coiled coil. Residues 194 to 235 (EPVCSGLQAQILHCYRDRPHEVLLCSDLVKAYQRCVSAAHKG) form the CHCH domain. Short sequence motifs (cx9C motif) lie at residues 197–207 (CSGLQAQILHC) and 218–228 (CSDLVKAYQRC). 2 disulfide bridges follow: Cys-197-Cys-228 and Cys-207-Cys-218.

Belongs to the MICOS complex subunit Mic19 family. Metazoan Mic25 subfamily. In terms of assembly, component of the mitochondrial contact site and cristae organizing system (MICOS) complex, composed of at least MICOS10/MIC10, CHCHD3/MIC19, CHCHD6/MIC25, APOOL/MIC27, IMMT/MIC60, APOO/MIC23/MIC26 and MICOS13/MIC13. This complex was also known under the names MINOS or MitOS complex. The MICOS complex associates with mitochondrial outer membrane proteins SAMM50, MTX1 and MTX2 (together described as components of the mitochondrial outer membrane sorting assembly machinery (SAM) complex) and DNAJC11, mitochondrial inner membrane protein TMEM11 and with HSPA9. The MICOS and SAM complexes together with DNAJC11 are part of a large protein complex spanning both membranes termed the mitochondrial intermembrane space bridging (MIB) complex. Interacts with DISC1. Interacts with DISC1. Interacts with IMMT/MIC60. (Microbial infection) Interacts with human cytomegalovirus protein UL37 isoform vMIA; this interaction rewires mitochondria by engaging the conserved MICOS complex.

Its subcellular location is the mitochondrion inner membrane. The protein localises to the mitochondrion. Functionally, component of the MICOS complex, a large protein complex of the mitochondrial inner membrane that plays crucial roles in the maintenance of crista junctions, inner membrane architecture, and formation of contact sites to the outer membrane. This is MICOS complex subunit MIC25 (CHCHD6) from Homo sapiens (Human).